A 332-amino-acid chain; its full sequence is Biotin synthase (332 aa).

The Radical SAM core domain occupies 51–279 (YKVQLASLLS…RSRVRLSAGR (229 aa)). [4Fe-4S] cluster is bound by residues Cys66, Cys70, and Cys73. 4 residues coordinate [2Fe-2S] cluster: Cys110, Cys142, Cys202, and Arg274.

The protein belongs to the radical SAM superfamily. Biotin synthase family. In terms of assembly, homodimer. It depends on [4Fe-4S] cluster as a cofactor. The cofactor is [2Fe-2S] cluster.

It catalyses the reaction (4R,5S)-dethiobiotin + (sulfur carrier)-SH + 2 reduced [2Fe-2S]-[ferredoxin] + 2 S-adenosyl-L-methionine = (sulfur carrier)-H + biotin + 2 5'-deoxyadenosine + 2 L-methionine + 2 oxidized [2Fe-2S]-[ferredoxin]. Its pathway is cofactor biosynthesis; biotin biosynthesis; biotin from 7,8-diaminononanoate: step 2/2. Functionally, catalyzes the conversion of dethiobiotin (DTB) to biotin by the insertion of a sulfur atom into dethiobiotin via a radical-based mechanism. The sequence is that of Biotin synthase from Prochlorococcus marinus (strain SARG / CCMP1375 / SS120).